The primary structure comprises 295 residues: 33 kDa chaperonin (295 aa).

Intrachain disulfides connect cysteine 238/cysteine 240 and cysteine 271/cysteine 274.

Belongs to the HSP33 family. Under oxidizing conditions two disulfide bonds are formed involving the reactive cysteines. Under reducing conditions zinc is bound to the reactive cysteines and the protein is inactive.

It localises to the cytoplasm. Functionally, redox regulated molecular chaperone. Protects both thermally unfolding and oxidatively damaged proteins from irreversible aggregation. Plays an important role in the bacterial defense system toward oxidative stress. This chain is 33 kDa chaperonin, found in Clostridium botulinum (strain Alaska E43 / Type E3).